The chain runs to 365 residues: MSDTSILAYCRPGYENDTANELTSRYGEAGFYGYPVSKKNSGFAHYHLYDAAQLEQTVTQFAVHDSIFPRQLVAVFAAINDVEKEDRVGQVLDALKEVEKPFSIFGAVDVEYPDTEEGKTLAKFCRKFTVPLRQALRKAGWLTAKENLGKPKLHIFFASFEICYIGFTLPSHASRDHLGICRLKFPSDSPSRSTLKLEDALVNMLSNKQQSKVLRSGGRAVDLGACPGGWTYQLVKRGMYVEAIDNGLIADSLMSTGLVEHHAADGFTYRPQFGRVDLLVCDMIEQPDRVAKLMGDWLVKHWATHAIFNIKLPMKRRYETVVEAMTSLNSRLDALDDAFAVKVRHLYHDRDEVTVTIVRTSKDEV.

Residues Ser193, 226–229 (CPGG), Asp245, Asp265, and Asp282 contribute to the S-adenosyl-L-methionine site. Residue Lys311 is the Proton acceptor of the active site.

The protein belongs to the class I-like SAM-binding methyltransferase superfamily. RNA methyltransferase RlmE family. RlmM subfamily. As to quaternary structure, monomer.

It is found in the cytoplasm. It carries out the reaction cytidine(2498) in 23S rRNA + S-adenosyl-L-methionine = 2'-O-methylcytidine(2498) in 23S rRNA + S-adenosyl-L-homocysteine + H(+). Its function is as follows. Catalyzes the 2'-O-methylation at nucleotide C2498 in 23S rRNA. The protein is Ribosomal RNA large subunit methyltransferase M of Alteromonas mediterranea (strain DSM 17117 / CIP 110805 / LMG 28347 / Deep ecotype).